The primary structure comprises 238 residues: Ribonuclease PH (238 aa).

Phosphate contacts are provided by residues Arg86 and 124–126; that span reads GTR.

It belongs to the RNase PH family. In terms of assembly, homohexameric ring arranged as a trimer of dimers.

It carries out the reaction tRNA(n+1) + phosphate = tRNA(n) + a ribonucleoside 5'-diphosphate. Phosphorolytic 3'-5' exoribonuclease that plays an important role in tRNA 3'-end maturation. Removes nucleotide residues following the 3'-CCA terminus of tRNAs; can also add nucleotides to the ends of RNA molecules by using nucleoside diphosphates as substrates, but this may not be physiologically important. Probably plays a role in initiation of 16S rRNA degradation (leading to ribosome degradation) during starvation. This Klebsiella pneumoniae (strain 342) protein is Ribonuclease PH.